A 349-amino-acid chain; its full sequence is MISSADSGRDAAWLDDFLALTLAGGTPPAHAGECAAHAVRWRWLGDGLLQFEPVDATRRMQSVLVSAGVHGDETAPIELLSMLVRDIAHGALPLRCRLLVALGNPGAMRAGERYLDDDLNRLFGGRHAPLATSREAPRAAQLEAAASAFFATAGRARGARWHIDMHTAIRASVFEQFALLPHTGEPPTRTMFEWLGEARIAAVLLHTAKGSTFSHFTAQTCGALACTLELGKVMPFGANDLSRFARADAAVRNLVSGRRDAARAALPRVFTVVDQITKQSDALELFVEKDVPNFTPFAQGTLLARDGDYRYAVRHAQERIVFPNPSVKPGLRAGLLVVETTLDTHAALA.

Positions 70, 73, and 166 each coordinate Zn(2+). E229 is an active-site residue.

The protein belongs to the AspA/AstE family. Succinylglutamate desuccinylase subfamily. It depends on Zn(2+) as a cofactor.

The enzyme catalyses N-succinyl-L-glutamate + H2O = L-glutamate + succinate. It functions in the pathway amino-acid degradation; L-arginine degradation via AST pathway; L-glutamate and succinate from L-arginine: step 5/5. Its function is as follows. Transforms N(2)-succinylglutamate into succinate and glutamate. The protein is Succinylglutamate desuccinylase of Burkholderia thailandensis (strain ATCC 700388 / DSM 13276 / CCUG 48851 / CIP 106301 / E264).